A 246-amino-acid chain; its full sequence is Ribonuclease PH (246 aa).

Residues R91 and 129-131 contribute to the phosphate site; that span reads GTR.

This sequence belongs to the RNase PH family. In terms of assembly, homohexameric ring arranged as a trimer of dimers.

It carries out the reaction tRNA(n+1) + phosphate = tRNA(n) + a ribonucleoside 5'-diphosphate. Its function is as follows. Phosphorolytic 3'-5' exoribonuclease that plays an important role in tRNA 3'-end maturation. Removes nucleotide residues following the 3'-CCA terminus of tRNAs; can also add nucleotides to the ends of RNA molecules by using nucleoside diphosphates as substrates, but this may not be physiologically important. Probably plays a role in initiation of 16S rRNA degradation (leading to ribosome degradation) during starvation. In Paraburkholderia xenovorans (strain LB400), this protein is Ribonuclease PH.